The following is a 503-amino-acid chain: Glutamate--tRNA ligase 1 (503 aa).

Positions P17–N27 match the 'HIGH' region motif. The short motif at K261 to R265 is the 'KMSKS' region element. ATP is bound at residue K264.

The protein belongs to the class-I aminoacyl-tRNA synthetase family. Glutamate--tRNA ligase type 1 subfamily. As to quaternary structure, monomer.

The protein resides in the cytoplasm. It catalyses the reaction tRNA(Glu) + L-glutamate + ATP = L-glutamyl-tRNA(Glu) + AMP + diphosphate. Functionally, catalyzes the attachment of glutamate to tRNA(Glu) in a two-step reaction: glutamate is first activated by ATP to form Glu-AMP and then transferred to the acceptor end of tRNA(Glu). In Levilactobacillus brevis (strain ATCC 367 / BCRC 12310 / CIP 105137 / JCM 1170 / LMG 11437 / NCIMB 947 / NCTC 947) (Lactobacillus brevis), this protein is Glutamate--tRNA ligase 1.